The sequence spans 199 residues: 1-acyl-sn-glycerol-3-phosphate acyltransferase (199 aa).

The short motif at 39–44 (HSGWVD) is the HXXXXD motif element.

Belongs to the 1-acyl-sn-glycerol-3-phosphate acyltransferase family.

The protein localises to the cell membrane. It catalyses the reaction a fatty acyl-[ACP] + a 1-acyl-sn-glycero-3-phosphate = a 1,2-diacyl-sn-glycero-3-phosphate + holo-[ACP]. The protein operates within lipid metabolism; phospholipid metabolism. Functionally, converts lysophosphatidic acid (LPA) into phosphatidic acid (PA) by incorporating an acyl moiety at the 2 position. This enzyme utilizes acyl-ACP as fatty acyl donor, but not acyl-CoA. The sequence is that of 1-acyl-sn-glycerol-3-phosphate acyltransferase (plsC) from Bacillus subtilis (strain 168).